Consider the following 892-residue polypeptide: Histone deacetylase 4 (892 aa).

The disordered stretch occupies residues 145-225 (NGNLSNLSVP…MSNVNGHDNS (81 aa)). 2 stretches are compositionally biased toward polar residues: residues 171–192 (SAPT…ISQL) and 208–222 (ESNS…VNGH). Residues 481-822 (STGLGYDPLM…VQALIGESDD (342 aa)) are histone deacetylase. The active site involves histidine 628.

Belongs to the histone deacetylase family. HD type 2 subfamily.

Its subcellular location is the nucleus. It carries out the reaction N(6)-acetyl-L-lysyl-[histone] + H2O = L-lysyl-[histone] + acetate. In terms of biological role, responsible for the deacetylation of lysine residues on the N-terminal part of the core histones (H2A, H2B, H3 and H4). Histone deacetylation gives a tag for epigenetic repression and plays an important role in transcriptional regulation, cell cycle progression and developmental events. Histone deacetylases act via the formation of large multiprotein complexes. In Caenorhabditis briggsae, this protein is Histone deacetylase 4 (hda-4).